The sequence spans 72 residues: MAKEDTLEFPGVVKELLPNATFRVELDNGHELIAVMAGKMRKNRIRVLAGDKVQVEMTPYDLSKGRINYRFK.

Residues 1-72 enclose the S1-like domain; it reads MAKEDTLEFP…SKGRINYRFK (72 aa).

It belongs to the IF-1 family. Component of the 30S ribosomal translation pre-initiation complex which assembles on the 30S ribosome in the order IF-2 and IF-3, IF-1 and N-formylmethionyl-tRNA(fMet); mRNA recruitment can occur at any time during PIC assembly.

The protein resides in the cytoplasm. One of the essential components for the initiation of protein synthesis. Stabilizes the binding of IF-2 and IF-3 on the 30S subunit to which N-formylmethionyl-tRNA(fMet) subsequently binds. Helps modulate mRNA selection, yielding the 30S pre-initiation complex (PIC). Upon addition of the 50S ribosomal subunit IF-1, IF-2 and IF-3 are released leaving the mature 70S translation initiation complex. This chain is Translation initiation factor IF-1, found in Cereibacter sphaeroides (strain ATCC 17029 / ATH 2.4.9) (Rhodobacter sphaeroides).